A 289-amino-acid polypeptide reads, in one-letter code: Ribosome-inactivating protein alpha-trichosanthin (289 aa).

The signal sequence occupies residues 1 to 23; that stretch reads MIRFLVLSLLILTLFLTTPAVEG. Glu183 is an active-site residue. Residues 271–289 constitute a propeptide, removed in mature form; it reads AMDDDVPMTQSFGCGSYAI.

It belongs to the ribosome-inactivating protein family. Type 1 RIP subfamily.

It carries out the reaction Endohydrolysis of the N-glycosidic bond at one specific adenosine on the 28S rRNA.. In terms of biological role, inactivates eukaryotic 60S ribosomal subunits. This Trichosanthes kirilowii (Chinese snake gourd) protein is Ribosome-inactivating protein alpha-trichosanthin.